The chain runs to 330 residues: Putative protein N-methyltransferase FAM86B1 (330 aa).

S-adenosyl-L-methionine is bound by residues Trp139, 165 to 167, Trp228, and Ala247; that span reads GSG.

Belongs to the class I-like SAM-binding methyltransferase superfamily. EEF2KMT family.

This is Putative protein N-methyltransferase FAM86B1 from Homo sapiens (Human).